A 32-amino-acid chain; its full sequence is Cytochrome b6-f complex subunit 6 (32 aa).

The chain crosses the membrane as a helical span at residues 6-26 (VFYIVFIALFFGIAVGIIFAI).

It belongs to the PetL family. As to quaternary structure, the 4 large subunits of the cytochrome b6-f complex are cytochrome b6, subunit IV (17 kDa polypeptide, PetD), cytochrome f and the Rieske protein, while the 4 small subunits are PetG, PetL, PetM and PetN. The complex functions as a dimer.

It localises to the cellular thylakoid membrane. Its function is as follows. Component of the cytochrome b6-f complex, which mediates electron transfer between photosystem II (PSII) and photosystem I (PSI), cyclic electron flow around PSI, and state transitions. PetL is important for photoautotrophic growth as well as for electron transfer efficiency and stability of the cytochrome b6-f complex. The sequence is that of Cytochrome b6-f complex subunit 6 from Mastigocladus laminosus (Fischerella sp.).